We begin with the raw amino-acid sequence, 730 residues long: MLFNSVLRQPQLGVLRNGWSSQYPLQSLLTGYQCSGNDEHTSYGETGVPVPPFGCTFSSAPNMEHVLAVANEEGFVRLYNTESQSFRKKCFKEWMAHWNAVFDLAWVPGELKLVTAAGDQTAKFWDVKAGELIGTCKGHQCSLKSVAFSKFEKAVFCTGGRDGNIMVWDTRCNKKDGFYRQVNQISGAHNTSDKQTPSKPKKKQNSKGLAPSVDFQQSVTVVLFQDENTLVSAGAVDGIIKVWDLRKNYTAYRQEPIASKSFLYPGSSTRKLGYSSLILDSTGSTLFANCTDDNIYMFNMTGLKTSPVAIFNGHQNSTFYVKSSLSPDDQFLVSGSSDEAAYIWKVSTPWQPPTVLLGHSQEVTSVCWCPSDFTKIATCSDDNTLKIWRLNRGLEEKPGGDKLSTVGWASQKKKESRPGLVTVTSSQSTPAKAPRAKCNPSNSSPSSAACAPSCAGDLPLPSNTPTFSIKTSPAKARSPINRRGSVSSVSPKPPSSFKMSIRNWVTRTPSSSPPITPPASETKIMSPRKALIPVSQKSSQAEACSESRNRVKRRLDSSCLESVKQKCVKSCNCVTELDGQVENLHLDLCCLAGNQEDLSKDSLGPTKSSKIEGAGTSISEPPSPISPYASESCGTLPLPLRPCGEGSEMVGKENSSPENKNWLLAMAAKRKAENPSPRSPSSQTPNSRRQSGKKLPSPVTITPSSMRKICTYFHRKSQEDFCGPEHSTEL.

N-acetylmethionine is present on Met1. 3 WD repeats span residues 47 to 89, 96 to 135, and 138 to 178; these read GVPV…FRKK, AHWN…LIGT, and GHQC…KDGF. Positions 168 to 171 match the DDB1-binding motif motif; it reads WDTR. The span at 188 to 198 shows a compositional bias: polar residues; that stretch reads AHNTSDKQTPS. Residues 188–210 are disordered; sequence AHNTSDKQTPSKPKKKQNSKGLA. Thr196 is modified (phosphothreonine). The Nuclear localization signal motif lies at 197–203; the sequence is PSKPKKK. WD repeat units follow at residues 214-253, 267-308, 313-354, and 358-398; these read DFQQ…TAYR, SSTR…TSPV, GHQN…QPPT, and GHSQ…EEKP. The short motif at 243–246 is the DDB1-binding motif element; it reads WDLR. The interval 399–443 is disordered; it reads GGDKLSTVGWASQKKKESRPGLVTVTSSQSTPAKAPRAKCNPSNS. Residues Ser410 and Ser426 each carry the phosphoserine modification. Position 464 is a phosphothreonine; by CDK1 and CDK2 (Thr464). A disordered region spans residues 465-498; sequence PTFSIKTSPAKARSPINRRGSVSSVSPKPPSSFK. Phosphoserine is present on residues Ser485, Ser490, Ser495, and Ser512. At Thr516 the chain carries Phosphothreonine. Phosphoserine is present on Ser557. Disordered regions lie at residues 599–631 and 644–703; these read SKDS…YASE and GEGS…TITP. 2 positions are modified to phosphoserine: Ser676 and Ser679. The segment covering 679–689 has biased composition (polar residues); it reads SPSSQTPNSRR. 2 positions are modified to phosphothreonine: Thr684 and Thr702. A Phosphoserine modification is found at Ser717.

This sequence belongs to the WD repeat cdt2 family. In terms of assembly, component of the DCX(DTL) E3 ubiquitin ligase complex (also called CRL4(CDT2)), at least composed of CUL4 (CUL4A or CUL4B), DDB1, DTL/CDT2 and RBX1. Interacts with CDKN1A. Interacts with DDB1. Interacts with FBXO11; SCF(FBXWO11) controls DTL stability but DCX(DTL) does not control FBXO11 stability. Interacts with CRY1. Ubiquitinated by the anaphase promoting complex/cyclosome (APC/C). Autoubiquitinated through 'Lys-48'-polyubiquitin chains in a PCNA-independent reaction, allowing proteasomal turnover. Polyubiquitinated by SCF(FBXO11) when not phosphorylated, leading to its degradation. A tight regulation of the polyubiquitination by SCF(FBXO11) is involved in the control of different processes such as TGF-beta signaling, cell cycle progression and exit. Post-translationally, phosphorylated at Thr-464 by CDK1/Cyclin-B and CDK2/Cyclin-A but not by CDK2/Cyclin-E, MAPK1 or PLK1. Phosphorylation at Thr-464 inhibits the interaction with FBXO11 and decreases upon cell cycle exit induced by TGF-beta or serum starvation. Expressed in placenta and testis, very low expression seen in skeletal muscle. Detected in all hematopoietic tissues examined, with highest expression in thymus and bone marrow. A low level detected in the spleen and lymph node, and barely detectable level in the peripheral leukocytes. RA treatment down-regulated the expression in NT2 cell.

Its subcellular location is the nucleus. It is found in the nucleus membrane. The protein localises to the cytoplasm. The protein resides in the cytoskeleton. It localises to the microtubule organizing center. Its subcellular location is the centrosome. It is found in the chromosome. The protein operates within protein modification; protein ubiquitination. In terms of biological role, substrate-specific adapter of a DCX (DDB1-CUL4-X-box) E3 ubiquitin-protein ligase complex required for cell cycle control, DNA damage response and translesion DNA synthesis. The DCX(DTL) complex, also named CRL4(CDT2) complex, mediates the polyubiquitination and subsequent degradation of CDT1, CDKN1A/p21(CIP1), FBH1, KMT5A and SDE2. CDT1 degradation in response to DNA damage is necessary to ensure proper cell cycle regulation of DNA replication. CDKN1A/p21(CIP1) degradation during S phase or following UV irradiation is essential to control replication licensing. KMT5A degradation is also important for a proper regulation of mechanisms such as TGF-beta signaling, cell cycle progression, DNA repair and cell migration. Most substrates require their interaction with PCNA for their polyubiquitination: substrates interact with PCNA via their PIP-box, and those containing the 'K+4' motif in the PIP box, recruit the DCX(DTL) complex, leading to their degradation. In undamaged proliferating cells, the DCX(DTL) complex also promotes the 'Lys-164' monoubiquitination of PCNA, thereby being involved in PCNA-dependent translesion DNA synthesis. The DDB1-CUL4A-DTL E3 ligase complex regulates the circadian clock function by mediating the ubiquitination and degradation of CRY1. The chain is Denticleless protein homolog (DTL) from Homo sapiens (Human).